The following is a 227-amino-acid chain: 2,3-bisphosphoglycerate-dependent phosphoglycerate mutase (227 aa).

Residues R7–N14, T20–G21, R59, E86–Y89, K97, R113–R114, and G182–N183 each bind substrate. The active-site Tele-phosphohistidine intermediate is the H8. E86 serves as the catalytic Proton donor/acceptor.

It belongs to the phosphoglycerate mutase family. BPG-dependent PGAM subfamily. As to quaternary structure, homodimer.

It carries out the reaction (2R)-2-phosphoglycerate = (2R)-3-phosphoglycerate. It functions in the pathway carbohydrate degradation; glycolysis; pyruvate from D-glyceraldehyde 3-phosphate: step 3/5. Functionally, catalyzes the interconversion of 2-phosphoglycerate and 3-phosphoglycerate. In Glaesserella parasuis serovar 5 (strain SH0165) (Haemophilus parasuis), this protein is 2,3-bisphosphoglycerate-dependent phosphoglycerate mutase.